Here is a 248-residue protein sequence, read N- to C-terminus: ATP synthase subunit a, chloroplastic (248 aa).

Helical transmembrane passes span 37–57 (GQVL…AFLG), 96–116 (VPFV…GALV), 135–155 (INTT…AGFH), 200–220 (LVVA…MMFL), and 221–241 (GLFT…AYIG).

The protein belongs to the ATPase A chain family. F-type ATPases have 2 components, CF(1) - the catalytic core - and CF(0) - the membrane proton channel. CF(1) has five subunits: alpha(3), beta(3), gamma(1), delta(1), epsilon(1). CF(0) has four main subunits: a, b, b' and c.

Its subcellular location is the plastid. The protein resides in the chloroplast thylakoid membrane. Functionally, key component of the proton channel; it plays a direct role in the translocation of protons across the membrane. This Staurastrum punctulatum (Green alga) protein is ATP synthase subunit a, chloroplastic.